The chain runs to 153 residues: D-aminoacyl-tRNA deacylase (153 aa).

A Gly-cisPro motif, important for rejection of L-amino acids motif is present at residues 137-138 (GP).

This sequence belongs to the DTD family. Homodimer.

It localises to the cytoplasm. It catalyses the reaction glycyl-tRNA(Ala) + H2O = tRNA(Ala) + glycine + H(+). The enzyme catalyses a D-aminoacyl-tRNA + H2O = a tRNA + a D-alpha-amino acid + H(+). An aminoacyl-tRNA editing enzyme that deacylates mischarged D-aminoacyl-tRNAs. Also deacylates mischarged glycyl-tRNA(Ala), protecting cells against glycine mischarging by AlaRS. Acts via tRNA-based rather than protein-based catalysis; rejects L-amino acids rather than detecting D-amino acids in the active site. By recycling D-aminoacyl-tRNA to D-amino acids and free tRNA molecules, this enzyme counteracts the toxicity associated with the formation of D-aminoacyl-tRNA entities in vivo and helps enforce protein L-homochirality. In Methylococcus capsulatus (strain ATCC 33009 / NCIMB 11132 / Bath), this protein is D-aminoacyl-tRNA deacylase.